The primary structure comprises 429 residues: Asparagine--tRNA ligase (429 aa).

Belongs to the class-II aminoacyl-tRNA synthetase family.

The protein resides in the cytoplasm. The catalysed reaction is tRNA(Asn) + L-asparagine + ATP = L-asparaginyl-tRNA(Asn) + AMP + diphosphate + H(+). The protein is Asparagine--tRNA ligase of Thermoplasma acidophilum (strain ATCC 25905 / DSM 1728 / JCM 9062 / NBRC 15155 / AMRC-C165).